The primary structure comprises 129 residues: Small ribosomal subunit protein uS8 (129 aa).

It belongs to the universal ribosomal protein uS8 family. As to quaternary structure, part of the 30S ribosomal subunit. Contacts proteins S5 and S12.

Its function is as follows. One of the primary rRNA binding proteins, it binds directly to 16S rRNA central domain where it helps coordinate assembly of the platform of the 30S subunit. This is Small ribosomal subunit protein uS8 from Spiroplasma kunkelii.